The sequence spans 334 residues: Dihydroorotate dehydrogenase (quinone) (334 aa).

Residues 59–63 (AGLDK) and threonine 83 contribute to the FMN site. Lysine 63 contributes to the substrate binding site. Substrate is bound at residue 108–112 (NRMGF). FMN-binding residues include asparagine 136 and asparagine 169. Asparagine 169 provides a ligand contact to substrate. Catalysis depends on serine 172, which acts as the Nucleophile. Substrate is bound at residue asparagine 174. Positions 214 and 242 each coordinate FMN. 243 to 244 (NT) is a binding site for substrate. Residues glycine 265, glycine 294, and 315-316 (YS) each bind FMN.

Belongs to the dihydroorotate dehydrogenase family. Type 2 subfamily. As to quaternary structure, monomer. FMN serves as cofactor.

The protein resides in the cell membrane. The enzyme catalyses (S)-dihydroorotate + a quinone = orotate + a quinol. It functions in the pathway pyrimidine metabolism; UMP biosynthesis via de novo pathway; orotate from (S)-dihydroorotate (quinone route): step 1/1. In terms of biological role, catalyzes the conversion of dihydroorotate to orotate with quinone as electron acceptor. The protein is Dihydroorotate dehydrogenase (quinone) of Acinetobacter baumannii (strain SDF).